A 124-amino-acid polypeptide reads, in one-letter code: uncharacterized protein (124 aa).

The tract at residues 1–28 (MGTSLRSQSFREPRPSYGRLHESQGRSL) is disordered. A compositionally biased stretch (basic and acidic residues) spans 9–28 (SFREPRPSYGRLHESQGRSL).

This is an uncharacterized protein from Mus musculus (Mouse).